We begin with the raw amino-acid sequence, 182 residues long: Ribosome maturation factor RimM (182 aa).

The PRC barrel domain occupies 103-182; it reads DGSYYWKDLM…TIEVDWDPGF (80 aa).

Belongs to the RimM family. As to quaternary structure, binds ribosomal protein uS19.

It localises to the cytoplasm. In terms of biological role, an accessory protein needed during the final step in the assembly of 30S ribosomal subunit, possibly for assembly of the head region. Essential for efficient processing of 16S rRNA. May be needed both before and after RbfA during the maturation of 16S rRNA. It has affinity for free ribosomal 30S subunits but not for 70S ribosomes. The protein is Ribosome maturation factor RimM of Citrobacter koseri (strain ATCC BAA-895 / CDC 4225-83 / SGSC4696).